A 367-amino-acid polypeptide reads, in one-letter code: Innexin inx2 (367 aa).

Over 1–22 the chain is Cytoplasmic; that stretch reads MFDVFGSVKGLLKIDQVCIDNN. The chain crosses the membrane as a helical span at residues 23–43; that stretch reads VFRMHYKATVIILIAFSLLVT. The Extracellular segment spans residues 44–109; it reads SRQYIGDPID…EDEVKYHKYY (66 aa). A helical transmembrane segment spans residues 110–130; the sequence is QWVCFVLFFQAILFYVPRYLW. The interval 130–179 is interaction with shg; sequence WKSWEGGRLKMLVMDLNSPIVNDECKNDRKKILVDYFIGNLNRHNFYAFR. Topologically, residues 131-179 are cytoplasmic; the sequence is KSWEGGRLKMLVMDLNSPIVNDECKNDRKKILVDYFIGNLNRHNFYAFR. The helical transmembrane segment at 180–200 threads the bilayer; that stretch reads FFVCEALNFVNVIGQIYFVDF. Topologically, residues 201-266 are extracellular; that stretch reads FLDGEFSTYG…VLPLNIVNEK (66 aa). Residues 267 to 287 form a helical membrane-spanning segment; sequence IYVFLWFWFIILSIMSGISLI. The Cytoplasmic portion of the chain corresponds to 288–367; it reads YRIAVVAGPK…HSAHKRPFDA (80 aa).

The protein belongs to the pannexin family. Monomer and heterooligomer with ogre or Inx3 (via cytoplasmic C-terminal region). Interacts (via cytoplasmic loop) with shg (via cytoplasmic region). Interacts with arm. In ovary, expressed in inner germarial sheath cells, prefollicular cells, follicle cells, nurse cells and oocytes. Expressed in embryonic epithelial cells. Expressed in foregut and hindgut from stage 11-17, segmentally repeated tracheal placodes at stage 14, salivary gland at stage 16 and proventriculus at stage 16-17 (at protein level). During germband extension stage (stage 7), expressed in epidermal epithelial cells. Expressed in cephalic furrow. Repeating epidermal pattern emerges at stage 11, refines to one or two cells at each side of the segment borders by stage 13. Expressed in the imaginal wing disk. In pupae, expressed in the CNS and in primary, secondary and tertiary pigment cells of the retina. Expressed in optic lamina of the adult CNS.

The protein resides in the cell membrane. It localises to the cell junction. It is found in the gap junction. Its subcellular location is the cytoplasm. The protein localises to the apical cell membrane. The protein resides in the apicolateral cell membrane. It localises to the basolateral cell membrane. It is found in the lateral cell membrane. Its function is as follows. Structural components of the gap junctions. Involved in gap junctional communication between germline and somatic cells which is essential for normal oogenesis. In embryonic epidermis, required for epithelial morphogenesis. Required for keyhole formation during early stages of proventriculus development in response to wg signaling. In follicle cells, promotes the formation of egg chambers in part through regulation of shg and baz at the boundary between germ cells and follicle cells. In inner germarial sheath cells, required for survival of early germ cells and for cyst formation. In Drosophila melanogaster (Fruit fly), this protein is Innexin inx2 (Inx2).